A 141-amino-acid chain; its full sequence is Ribosome-binding factor A (141 aa).

This sequence belongs to the RbfA family. As to quaternary structure, monomer. Binds 30S ribosomal subunits, but not 50S ribosomal subunits or 70S ribosomes.

It is found in the cytoplasm. In terms of biological role, one of several proteins that assist in the late maturation steps of the functional core of the 30S ribosomal subunit. Associates with free 30S ribosomal subunits (but not with 30S subunits that are part of 70S ribosomes or polysomes). Required for efficient processing of 16S rRNA. May interact with the 5'-terminal helix region of 16S rRNA. This chain is Ribosome-binding factor A, found in Beijerinckia indica subsp. indica (strain ATCC 9039 / DSM 1715 / NCIMB 8712).